We begin with the raw amino-acid sequence, 297 residues long: Aspartate carbamoyltransferase catalytic subunit (297 aa).

2 residues coordinate carbamoyl phosphate: R52 and T53. Position 80 (K80) interacts with L-aspartate. Carbamoyl phosphate is bound by residues R102, H130, and Q133. L-aspartate contacts are provided by R167 and R217. Carbamoyl phosphate is bound by residues G256 and P257.

Belongs to the aspartate/ornithine carbamoyltransferase superfamily. ATCase family. Heterododecamer (2C3:3R2) of six catalytic PyrB chains organized as two trimers (C3), and six regulatory PyrI chains organized as three dimers (R2).

The catalysed reaction is carbamoyl phosphate + L-aspartate = N-carbamoyl-L-aspartate + phosphate + H(+). Its pathway is pyrimidine metabolism; UMP biosynthesis via de novo pathway; (S)-dihydroorotate from bicarbonate: step 2/3. Catalyzes the condensation of carbamoyl phosphate and aspartate to form carbamoyl aspartate and inorganic phosphate, the committed step in the de novo pyrimidine nucleotide biosynthesis pathway. This is Aspartate carbamoyltransferase catalytic subunit from Helicobacter hepaticus (strain ATCC 51449 / 3B1).